We begin with the raw amino-acid sequence, 187 residues long: ATP synthase subunit b (187 aa).

Residues 32–52 traverse the membrane as a helical segment; the sequence is NILDTNLINLAIIITVLFVFG.

The protein belongs to the ATPase B chain family. As to quaternary structure, F-type ATPases have 2 components, F(1) - the catalytic core - and F(0) - the membrane proton channel. F(1) has five subunits: alpha(3), beta(3), gamma(1), delta(1), epsilon(1). F(0) has four main subunits: a(1), b(1), b'(1) and c(10-14). The alpha and beta chains form an alternating ring which encloses part of the gamma chain. F(1) is attached to F(0) by a central stalk formed by the gamma and epsilon chains, while a peripheral stalk is formed by the delta, b and b' chains.

Its subcellular location is the cellular thylakoid membrane. F(1)F(0) ATP synthase produces ATP from ADP in the presence of a proton or sodium gradient. F-type ATPases consist of two structural domains, F(1) containing the extramembraneous catalytic core and F(0) containing the membrane proton channel, linked together by a central stalk and a peripheral stalk. During catalysis, ATP synthesis in the catalytic domain of F(1) is coupled via a rotary mechanism of the central stalk subunits to proton translocation. Its function is as follows. Component of the F(0) channel, it forms part of the peripheral stalk, linking F(1) to F(0). In Trichormus variabilis (strain ATCC 29413 / PCC 7937) (Anabaena variabilis), this protein is ATP synthase subunit b.